We begin with the raw amino-acid sequence, 88 residues long: DNA-directed RNA polymerase subunit omega (88 aa).

It belongs to the RNA polymerase subunit omega family. In terms of assembly, the RNAP catalytic core consists of 2 alpha, 1 beta, 1 beta' and 1 omega subunit. When a sigma factor is associated with the core the holoenzyme is formed, which can initiate transcription.

It catalyses the reaction RNA(n) + a ribonucleoside 5'-triphosphate = RNA(n+1) + diphosphate. Functionally, promotes RNA polymerase assembly. Latches the N- and C-terminal regions of the beta' subunit thereby facilitating its interaction with the beta and alpha subunits. This is DNA-directed RNA polymerase subunit omega from Pseudomonas aeruginosa (strain LESB58).